The sequence spans 225 residues: Cytidylate kinase (225 aa).

12-20 (GPSGAGKGT) contacts ATP.

The protein belongs to the cytidylate kinase family. Type 1 subfamily.

It is found in the cytoplasm. The catalysed reaction is CMP + ATP = CDP + ADP. It carries out the reaction dCMP + ATP = dCDP + ADP. The polypeptide is Cytidylate kinase (Pectobacterium atrosepticum (strain SCRI 1043 / ATCC BAA-672) (Erwinia carotovora subsp. atroseptica)).